The following is a 282-amino-acid chain: Protease HtpX homolog (282 aa).

2 helical membrane passes run 6–26 (TFILMTFLALIFMFFGGLIGG) and 28–48 (QGVIIAFVVALGMNFFSYFFS). Residue H130 participates in Zn(2+) binding. Residue E131 is part of the active site. H134 lines the Zn(2+) pocket. Transmembrane regions (helical) follow at residues 140–160 (ILIGSVAAVFAGAIAILANFA) and 177–197 (ILMIVAAIIMPIAAAIIQMAI). Position 202 (E202) interacts with Zn(2+).

It belongs to the peptidase M48B family. Requires Zn(2+) as cofactor.

The protein resides in the cell inner membrane. This Campylobacter hominis (strain ATCC BAA-381 / DSM 21671 / CCUG 45161 / LMG 19568 / NCTC 13146 / CH001A) protein is Protease HtpX homolog.